The chain runs to 166 residues: UPF0303 protein Avin_29320 (166 aa).

It belongs to the UPF0303 family.

This chain is UPF0303 protein Avin_29320, found in Azotobacter vinelandii (strain DJ / ATCC BAA-1303).